Here is a 157-residue protein sequence, read N- to C-terminus: BPTI/Kunitz domain-containing protein 3 (157 aa).

An N-terminal signal peptide occupies residues M1–C16. BPTI/Kunitz inhibitor domains follow at residues C42–C95 and C97–C151. Intrachain disulfides connect C42-C95, C70-C91, C97-C151, C107-C134, and C126-C147.

In terms of tissue distribution, nacreous layer of shell (at protein level).

It localises to the secreted. In Margaritifera margaritifera (Freshwater pearl mussel), this protein is BPTI/Kunitz domain-containing protein 3.